The sequence spans 78 residues: Keratin-associated protein 6-5 (78 aa).

The 25 X 2 AA repeats of G-[YCGS] stretch occupies residues 3–76 (GYYGNYYGGR…GSGYGSGFGY (74 aa)).

Belongs to the KRTAP type 6 family. In terms of assembly, interacts with hair keratins. As to expression, strong expression in narrowly defined pattern restricted to the lower and middle cortical regions of the hair shaft in both developing and cycling hair. During hair follicle regression (catagen), expression levels decrease until expression is no longer detectable in follicles at resting stage (telogen).

Its function is as follows. In the hair cortex, hair keratin intermediate filaments are embedded in an interfilamentous matrix, consisting of hair keratin-associated proteins (KRTAP), which are essential for the formation of a rigid and resistant hair shaft through their extensive disulfide bond cross-linking with abundant cysteine residues of hair keratins. The matrix proteins include the high-sulfur and high-glycine-tyrosine keratins. In Mus musculus (Mouse), this protein is Keratin-associated protein 6-5 (Krtap6-5).